Consider the following 78-residue polypeptide: D-alanyl carrier protein (78 aa).

One can recognise a Carrier domain in the interval 1–78 (MAFRENVLEI…MIITQLEALK (78 aa)). An O-(pantetheine 4'-phosphoryl)serine modification is found at Ser36.

The protein belongs to the DltC family. 4'-phosphopantetheine is transferred from CoA to a specific serine of apo-DCP.

Its subcellular location is the cytoplasm. It participates in cell wall biogenesis; lipoteichoic acid biosynthesis. Its function is as follows. Carrier protein involved in the D-alanylation of lipoteichoic acid (LTA). The loading of thioester-linked D-alanine onto DltC is catalyzed by D-alanine--D-alanyl carrier protein ligase DltA. The DltC-carried D-alanyl group is further transferred to cell membrane phosphatidylglycerol (PG) by forming an ester bond, probably catalyzed by DltD. D-alanylation of LTA plays an important role in modulating the properties of the cell wall in Gram-positive bacteria, influencing the net charge of the cell wall. The chain is D-alanyl carrier protein from Listeria innocua serovar 6a (strain ATCC BAA-680 / CLIP 11262).